A 351-amino-acid chain; its full sequence is Glycerol-3-phosphate dehydrogenase 1-like protein (351 aa).

11–16 (GSGNWG) is a binding site for NAD(+). Lys-121 is a binding site for substrate. Ala-154 provides a ligand contact to NAD(+). Residue Lys-205 is the Proton acceptor of the active site. Positions 271, 298, and 300 each coordinate NAD(+). 271–272 (RN) is a substrate binding site.

Belongs to the NAD-dependent glycerol-3-phosphate dehydrogenase family.

It is found in the cytoplasm. The enzyme catalyses sn-glycerol 3-phosphate + NAD(+) = dihydroxyacetone phosphate + NADH + H(+). Functionally, plays a role in regulating cardiac sodium current. The polypeptide is Glycerol-3-phosphate dehydrogenase 1-like protein (gpd1l) (Danio rerio (Zebrafish)).